The chain runs to 64 residues: Large ribosomal subunit protein bL33c (64 aa).

The protein belongs to the bacterial ribosomal protein bL33 family.

It is found in the plastid. It localises to the chloroplast. This Phaeodactylum tricornutum (strain CCAP 1055/1) protein is Large ribosomal subunit protein bL33c.